The following is a 172-amino-acid chain: Transcriptional activator protein (172 aa).

Residues K56 to R71 carry the Nuclear localization signal motif. The segment at C76–H93 is a zinc-finger region. The tract at residues D119–K172 is disordered. Over residues S137–S152 the composition is skewed to polar residues. A transactivation region spans residues S158 to K172.

This sequence belongs to the geminiviridae transcriptional activator protein family. In terms of assembly, monomer. Homodimer. Homooligomer. Self-interaction correlates with nuclear localization and efficient activation of transcription. Monomers suppress local silencing by interacting with and inactivating host adenosine kinase 2 (ADK2) in the cytoplasm. Interacts with and inhibits host SNF1 kinase. Binds to ssDNA. Post-translationally, phosphorylated.

The protein localises to the host nucleus. It localises to the host cytoplasm. Strong activator of the late viral genes promoters. Enhances the expression of the capsid protein and nuclear shuttle protein. Acts as a suppressor of RNA-mediated gene silencing, also known as post-transcriptional gene silencing (PTGS), a mechanism of plant viral defense that limits the accumulation of viral RNAs. Suppresses the host RNA silencing by inhibiting adenosine kinase 2 (ADK2), a kinase involved in a general methylation pathway. Also suppresses the host basal defense by interacting with and inhibiting SNF1 kinase, a key regulator of cell metabolism implicated in innate antiviral defense. Determines pathogenicity. This is Transcriptional activator protein from Bean golden yellow mosaic virus (isolate Puerto Rico-Japan) (BGYMV).